The following is an 804-amino-acid chain: Probable cadmium-transporting ATPase (804 aa).

HMA domains are found at residues 11–74 and 89–152; these read DKQV…LKVA and DKNV…LKVI. Cd(2+) contacts are provided by Cys22, Cys25, Cys100, and Cys103. 5 helical membrane-spanning segments follow: residues 183 to 203, 207 to 227, 248 to 268, 413 to 433, and 441 to 461; these read STLL…FVNG, LVTS…LFKV, IGAA…LFAI, IIMV…GGSW, and LAVL…ISIV. Catalysis depends on Asp492, which acts as the 4-aspartylphosphate intermediate. 2 consecutive transmembrane segments (helical) span residues 749-771 and 776-798; these read LNII…LLVI and TLWI…SLRL.

This sequence belongs to the cation transport ATPase (P-type) (TC 3.A.3) family. Type IB subfamily.

It localises to the cell membrane. The catalysed reaction is Cd(2+)(in) + ATP + H2O = Cd(2+)(out) + ADP + phosphate + H(+). Its function is as follows. Couples the hydrolysis of ATP with the export of cadmium. Involved in cadmium resistance. This Staphylococcus aureus protein is Probable cadmium-transporting ATPase (cadA).